Here is a 414-residue protein sequence, read N- to C-terminus: Gamma-glutamyl phosphate reductase (414 aa).

Belongs to the gamma-glutamyl phosphate reductase family.

It is found in the cytoplasm. The catalysed reaction is L-glutamate 5-semialdehyde + phosphate + NADP(+) = L-glutamyl 5-phosphate + NADPH + H(+). Its pathway is amino-acid biosynthesis; L-proline biosynthesis; L-glutamate 5-semialdehyde from L-glutamate: step 2/2. Functionally, catalyzes the NADPH-dependent reduction of L-glutamate 5-phosphate into L-glutamate 5-semialdehyde and phosphate. The product spontaneously undergoes cyclization to form 1-pyrroline-5-carboxylate. This Clostridium botulinum (strain Eklund 17B / Type B) protein is Gamma-glutamyl phosphate reductase.